The primary structure comprises 416 residues: F-box/FBD/LRR-repeat protein At1g13570 (416 aa).

The F-box domain occupies 5-53 (PDFISDLPQSIIENILTRLSIRDAIRTSVLSSKWRYKWSTLTDLVFDEK). LRR repeat units follow at residues 115 to 142 (VLKL…ELCH), 164 to 189 (QILV…SLSY), 203 to 229 (MYLY…SVSM), 238 to 263 (FEQS…VGYI), and 294 to 321 (CFED…KVSA). The FBD domain occupies 346–384 (LPSLESVKITDASGIRYELEFIRFLLGTSPVLETVTVSS).

This chain is F-box/FBD/LRR-repeat protein At1g13570, found in Arabidopsis thaliana (Mouse-ear cress).